The chain runs to 1274 residues: Mediator of RNA polymerase II transcription subunit 14 (1274 aa).

Disordered regions lie at residues 1 to 40 (MENG…KAHA), 1056 to 1142 (LVGT…LHTQ), and 1155 to 1274 (AQRQ…VVID). Residues 27–37 (AKREGSPDKGK) are compositionally biased toward basic and acidic residues. A compositionally biased stretch (polar residues) spans 1075-1085 (QDLQQGPQKTP). Over residues 1090–1104 (AAQAAQAAQAAQAAQ) the composition is skewed to low complexity. The span at 1108 to 1119 (PQRPKQQPPTPS) shows a compositional bias: pro residues. Low complexity-rich tracts occupy residues 1120–1142 (QPQQ…LHTQ), 1155–1172 (AQRQ…NNNT), and 1183–1252 (PQQR…PQGQ). Positions 1253-1265 (PGHGGGANGGMGG) are enriched in gly residues.

This sequence belongs to the Mediator complex subunit 14 family. In terms of assembly, component of the Mediator complex.

The protein resides in the nucleus. Component of the Mediator complex, a coactivator involved in the regulated transcription of nearly all RNA polymerase II-dependent genes. Mediator functions as a bridge to convey information from gene-specific regulatory proteins to the basal RNA polymerase II transcription machinery. Mediator is recruited to promoters by direct interactions with regulatory proteins and serves as a scaffold for the assembly of a functional preinitiation complex with RNA polymerase II and the general transcription factors. The polypeptide is Mediator of RNA polymerase II transcription subunit 14 (rgr1) (Neurospora crassa (strain ATCC 24698 / 74-OR23-1A / CBS 708.71 / DSM 1257 / FGSC 987)).